The following is a 338-amino-acid chain: Fe-S cluster assembly protein DRE2 (338 aa).

Residues 1 to 165 (MAKSGLLLIH…LPSFKKAANK (165 aa)) form an N-terminal SAM-like domain region. Residues 166–232 (PLPTFKKKVE…DDLLNEEDAK (67 aa)) form a linker region. The segment at 181-223 (VEARVHKAENDDDELEDEEDENLFDASRSKYFDEDDSESLDED) is disordered. Acidic residues-rich tracts occupy residues 190–203 (NDDD…DENL) and 213–223 (DEDDSESLDED). [2Fe-2S] cluster contacts are provided by Cys242, Cys253, Cys256, and Cys258. The fe-S binding site A stretch occupies residues 242–258 (CGKSKTKKKKACKDCSC). Positions 301, 304, 312, and 315 each coordinate [4Fe-4S] cluster. 2 consecutive short sequence motifs (cx2C motif) follow at residues 301–304 (CGSC) and 312–315 (CTGC). Positions 301–315 (CGSCSLGDAFRCTGC) are fe-S binding site B.

The protein belongs to the anamorsin family. Monomer. Interacts with TAH18. Interacts with MIA40. [2Fe-2S] cluster serves as cofactor. It depends on [4Fe-4S] cluster as a cofactor.

It localises to the cytoplasm. The protein localises to the mitochondrion intermembrane space. Component of the cytosolic iron-sulfur (Fe-S) protein assembly (CIA) machinery required for the maturation of extramitochondrial Fe-S proteins. Part of an electron transfer chain functioning in an early step of cytosolic Fe-S biogenesis, facilitating the de novo assembly of a [4Fe-4S] cluster on the scaffold complex CFD1-NBP35. Electrons are transferred to DRE2 from NADPH via the FAD- and FMN-containing protein TAH18. TAH18-DRE2 are also required for the assembly of the diferric tyrosyl radical cofactor of ribonucleotide reductase (RNR), probably by providing electrons for reduction during radical cofactor maturation in the catalytic small subunit RNR2. In Candida glabrata (strain ATCC 2001 / BCRC 20586 / JCM 3761 / NBRC 0622 / NRRL Y-65 / CBS 138) (Yeast), this protein is Fe-S cluster assembly protein DRE2.